Here is a 486-residue protein sequence, read N- to C-terminus: Glutamate--tRNA ligase (486 aa).

The short motif at 11 to 21 (PSPTGLLHIGN) is the 'HIGH' region element. The 'KMSKS' region signature appears at 255-259 (KLSKR). Lysine 258 serves as a coordination point for ATP.

The protein belongs to the class-I aminoacyl-tRNA synthetase family. Glutamate--tRNA ligase type 1 subfamily. In terms of assembly, monomer.

Its subcellular location is the cytoplasm. It catalyses the reaction tRNA(Glu) + L-glutamate + ATP = L-glutamyl-tRNA(Glu) + AMP + diphosphate. Its function is as follows. Catalyzes the attachment of glutamate to tRNA(Glu) in a two-step reaction: glutamate is first activated by ATP to form Glu-AMP and then transferred to the acceptor end of tRNA(Glu). In Streptococcus pneumoniae serotype 19F (strain G54), this protein is Glutamate--tRNA ligase.